We begin with the raw amino-acid sequence, 243 residues long: 4-hydroxy-tetrahydrodipicolinate reductase (243 aa).

Residues 9-14 (GANGKM), 78-80 (GTS), and 104-107 (APNF) contribute to the NAD(+) site. H134 (proton donor/acceptor) is an active-site residue. Position 135 (H135) interacts with (S)-2,3,4,5-tetrahydrodipicolinate. The active-site Proton donor is the K138. 144–145 (GT) is a binding site for (S)-2,3,4,5-tetrahydrodipicolinate.

It belongs to the DapB family.

Its subcellular location is the cytoplasm. The catalysed reaction is (S)-2,3,4,5-tetrahydrodipicolinate + NAD(+) + H2O = (2S,4S)-4-hydroxy-2,3,4,5-tetrahydrodipicolinate + NADH + H(+). The enzyme catalyses (S)-2,3,4,5-tetrahydrodipicolinate + NADP(+) + H2O = (2S,4S)-4-hydroxy-2,3,4,5-tetrahydrodipicolinate + NADPH + H(+). It functions in the pathway amino-acid biosynthesis; L-lysine biosynthesis via DAP pathway; (S)-tetrahydrodipicolinate from L-aspartate: step 4/4. Its function is as follows. Catalyzes the conversion of 4-hydroxy-tetrahydrodipicolinate (HTPA) to tetrahydrodipicolinate. The chain is 4-hydroxy-tetrahydrodipicolinate reductase from Legionella pneumophila (strain Corby).